A 162-amino-acid chain; its full sequence is G/U mismatch-specific DNA glycosylase (162 aa).

Belongs to the uracil-DNA glycosylase (UDG) superfamily. TDG/mug family. In terms of assembly, binds DNA as a monomer.

The protein localises to the cytoplasm. It catalyses the reaction Specifically hydrolyzes mismatched double-stranded DNA and polynucleotides, releasing free uracil.. Excises ethenocytosine and uracil, which can arise by alkylation or deamination of cytosine, respectively, from the corresponding mispairs with guanine in ds-DNA. It is capable of hydrolyzing the carbon-nitrogen bond between the sugar-phosphate backbone of the DNA and the mispaired base. The complementary strand guanine functions in substrate recognition. Required for DNA damage lesion repair in stationary-phase cells. This Serratia marcescens protein is G/U mismatch-specific DNA glycosylase.